A 430-amino-acid chain; its full sequence is Vitamin B6 salvage pathway transcriptional repressor PtsJ (430 aa).

An HTH gntR-type domain is found at 4–72 (GKTANEIFDS…GRNGTVIKGS (69 aa)). Positions 32-51 (VRELASELKVNRNTVAAAYK) form a DNA-binding region, H-T-H motif. The tract at residues 70-95 (KGSPSPVALEGGDPHTPLHDLSGGNP) is disordered. Residue lysine 282 is modified to N6-(pyridoxal phosphate)lysine.

This sequence in the C-terminal section; belongs to the class-I pyridoxal-phosphate-dependent aminotransferase family. As to quaternary structure, homodimer in both apo- and holo-forms.

Its function is as follows. Acts as a transcriptional repressor of the pdxK gene, encoding a pyridoxal kinase involved in the vitamin B6 salvage pathway. Also represses transcription of its own gene. Binds to the ptsJ-pdxK intergenic region, but does not bind pdxY and pdxH promoters. Among all six B6 vitamers, only pyridoxal 5'-phosphate (PLP) clearly binds to the protein and acts as an effector molecule for PtsJ, inducing a protein conformational change that increases affinity for DNA. Thus, PLP stabilizes protein-DNA interactions, reinforcing repression. In Salmonella typhimurium (strain LT2 / SGSC1412 / ATCC 700720), this protein is Vitamin B6 salvage pathway transcriptional repressor PtsJ.